The primary structure comprises 687 residues: Carboxysome assembly protein CcmM (687 aa).

Positions 242-327 (SINSDITNQI…RVVEVIIQRP (86 aa)) are rbcS-like repeat 1, SSUL1. 2 disordered regions span residues 328–355 (GDVP…SAVA) and 442–476 (VHRP…SSAG). The span at 335–346 (SRGTTTTKALSS) shows a compositional bias: polar residues. Residues 366 to 445 (ANQLRALLHQ…RVAEIVVHRP (80 aa)) form a rbcS-like repeat 2, SSUL2 region. Positions 451–472 (GKPSSSSSSVGYKSAPVSSAGG) are enriched in low complexity. The interval 480-562 (PEVIATVRGL…RVLEQIIQRP (83 aa)) is rbcS-like repeat 3, SSUL3. Residues 565–590 (NVVAGRSPSSSSASTSSSASSNGFGS) are disordered. A compositionally biased stretch (low complexity) spans 568 to 587 (AGRSPSSSSASTSSSASSNG). The interval 599-687 (SAVRLDNSVV…RVLETIIQRP (89 aa)) is rbcS-like repeat 4, SSUL4.

This sequence belongs to the gamma-class carbonic anhydrase family. In terms of assembly, probably forms homotrimers. Full length CcmM interacts with CcaA, CcmK1, CcmK2, CcmK4, CcmL, CcmN and itself, while the N-terminus of CcmM (first 249 residues) only interacts with CcaA, CcmM and CcmN. A probable CcmM-CcaA-CcmN complex as well as a CcaA-RuBisCO-CcmM complex can also be isolated. Interacts with full-length CcaA and the first 220 residues of CcaA; surface residues Gln-177 to Gln-188 are responsible in part for binding. Multiple forms of the protein of 73 (full length), 62, 52 (the most predominant form) and 36 kDa are seen even in the presence of protease inhibitors. CcmM52 interacts with CcaA.

The protein localises to the carboxysome. Functions as a scaffold protein for the assembly of beta-carboxysomes, initiates carboxysome assembly via its N-terminal domain binding to CcaA, CcmK and CcmL. Binds HCO(3)-, suggesting it may play a role in the activity or regulation of bicarbonate dehydration. Also initiates carboxysome assembly by coalescing RuBisCO (ribulose bisphosphate carboxylase, rbcL-rbcS) via its SSU-like domains. Produced as a full-length and a shorter form; both forms are required for correct carboxysome assembly and growth. Despite its strong similarity to gamma-class carbonic anhydrase (CA) it does not have detectable CA activity. In terms of biological role, beta-carboxysome assembly initiates when soluble RuBisCO is condensed into a liquid matrix in a pre-carboxysome by the RbcS-like domains of probably both forms of CcmM. CcmN interacts with the N-terminus of full length CcmM, and then recruits the shell proteins (CcmK) via CcmN's encapsulation peptide. CcmM73 also interacts with CcmK proteins and CcmL directly. Shell formation requires CcmK proteins and CcmO. CcmL caps the otherwise elongated carboxysome. Once fully encapsulated carboxysomes are formed, they migrate within the cell probably via interactions with the cytoskeleton. The polypeptide is Carboxysome assembly protein CcmM (Synechocystis sp. (strain ATCC 27184 / PCC 6803 / Kazusa)).